We begin with the raw amino-acid sequence, 298 residues long: MWGACKVKVHDSLATISITLRRYLRLGATMAKSKFEYVRDFEADDTCLAHCWVVVRLDGRNFHRFAEKHNFAKPNDSRALQLMTKCAQTVMEELEDIVIAYGQSDEYSFVFKRKTNWFKRRASKFMTHVASQFASSYVFYWRDYFEDQPLLYPPGFDGRVVVYPSNQTLKDYLSWRQADCHINNLYNTVFWALIQQSGLTPVQAQGRLQGTLAADKNEILFSEFNINYNNELPMYRKGTVLIWQKVDEVMTKEIKLPTEMEGKKMAVTRTRTKPVPLHCDIIGDAFWKEHPEILDEDS.

Asp58, Gly59, and Asp105 together coordinate Mg(2+). GTP contacts are provided by residues 58–63 (DGRNFH) and 104–105 (SD).

This sequence belongs to the tRNA(His) guanylyltransferase family. As to quaternary structure, homotetramer. Interacts with MFN1 and MFN2; functions as a guanyl-nucleotide exchange factor/GEF for MFN2 and also probably MFN1. The cofactor is Mg(2+). As to expression, expressed in many tissues.

The protein resides in the cytoplasm. It is found in the mitochondrion outer membrane. It catalyses the reaction a 5'-end ribonucleotide-tRNA(His) + GTP + ATP + H2O = a 5'-end phospho-guanosine-ribonucleotide-tRNA(His) + AMP + 2 diphosphate + H(+). Functionally, adds a GMP to the 5'-end of tRNA(His) after transcription and RNase P cleavage. This step is essential for proper recognition of the tRNA and for the fidelity of protein synthesis. Also functions as a guanyl-nucleotide exchange factor/GEF for the MFN1 and MFN2 mitofusins thereby regulating mitochondrial fusion. By regulating both mitochondrial dynamics and bioenergetic function, it contributes to cell survival following oxidative stress. This chain is Probable tRNA(His) guanylyltransferase (THG1L), found in Homo sapiens (Human).